The primary structure comprises 185 residues: Photosystem I assembly protein Ycf4 (185 aa).

3 helical membrane-spanning segments follow: residues 22 to 42, 57 to 77, and 101 to 121; these read FFFA…GFSS, ILFV…LFFS, and FYVF…LRVP.

It belongs to the Ycf4 family.

Its subcellular location is the plastid. The protein resides in the chloroplast thylakoid membrane. Its function is as follows. Seems to be required for the assembly of the photosystem I complex. This Gnetum parvifolium (Small-leaved jointfir) protein is Photosystem I assembly protein Ycf4.